Consider the following 156-residue polypeptide: FAD synthase (156 aa).

ATP is bound by residues 16–17 (TF), 21–24 (HPGH), Asp101, and Tyr129.

The protein belongs to the archaeal FAD synthase family. As to quaternary structure, homodimer. A divalent metal cation is required as a cofactor.

The enzyme catalyses FMN + ATP + H(+) = FAD + diphosphate. Its pathway is cofactor biosynthesis; FAD biosynthesis; FAD from FMN: step 1/1. In terms of biological role, catalyzes the transfer of the AMP portion of ATP to flavin mononucleotide (FMN) to produce flavin adenine dinucleotide (FAD) coenzyme. This Methanococcus aeolicus (strain ATCC BAA-1280 / DSM 17508 / OCM 812 / Nankai-3) protein is FAD synthase.